A 163-amino-acid polypeptide reads, in one-letter code: Norbelladine synthase (163 aa).

68–71 provides a ligand contact to tyramine; that stretch reads YHKE. Lysine 83 serves as the catalytic Proton donor.

Belongs to the BetVI family. Mostly expressed in bulbs, and, to a lower extent, in roots, stems, leaves and flowers.

The catalysed reaction is 3,4-dihydroxybenzaldehyde + tyramine + AH2 = norbelladine + A + H2O. Its pathway is alkaloid biosynthesis. Catalyzes the condensation of tyramine and 3,4-dihydroxybenzaldehyde (3,4-DHBA) to form norbelladine, the common precursor to all Amaryllidaceae alkaloids such as galanthamine, lycorine and haemanthamine, and including haemanthamine- and crinamine-type alkaloids, promising anticancer agents. The protein is Norbelladine synthase of Narcissus pseudonarcissus (Daffodil).